We begin with the raw amino-acid sequence, 255 residues long: Adenylate dimethylallyltransferase (255 aa).

The protein belongs to the isopentenyl transferase family.

The enzyme catalyses dimethylallyl diphosphate + AMP = N(6)-(dimethylallyl)adenosine 5'-phosphate + diphosphate. In terms of biological role, transfers dimethylallyl groups to AMP as part of the biosynthesis of cytokinin phytohormones. The sequence is that of Adenylate dimethylallyltransferase (fas4) from Rhodococcoides fascians (Rhodococcus fascians).